We begin with the raw amino-acid sequence, 344 residues long: Cell cycle control protein 50C (344 aa).

The Cytoplasmic portion of the chain corresponds to 1–34; it reads MEETPQHCLSRLPDNSALKQQELPAHRLYFTARR. Residues 35 to 55 form a helical membrane-spanning segment; sequence VLFVFFTTGIFCLCMGIILIL. Topologically, residues 56–306 are extracellular; that stretch reads SARSTQEIEI…STLTWCGGNS (251 aa). 2 N-linked (GlcNAc...) asparagine glycosylation sites follow: asparagine 66 and asparagine 261. The helical transmembrane segment at 307-327 threads the bilayer; sequence LFLGLAYTVTGAITWLASFTM. Residues 328–344 lie on the Cytoplasmic side of the membrane; that stretch reads MAIHITLKNKQMSFFHQ.

This sequence belongs to the CDC50/LEM3 family. As to expression, specifically expressed in testis.

It is found in the membrane. In Macaca fascicularis (Crab-eating macaque), this protein is Cell cycle control protein 50C (TMEM30C).